The following is a 154-amino-acid chain: 6,7-dimethyl-8-ribityllumazine synthase (154 aa).

5-amino-6-(D-ribitylamino)uracil contacts are provided by residues Phe23, 57–59, and 81–83; these read AFE and AVI. (2S)-2-hydroxy-3-oxobutyl phosphate is bound at residue 86–87; the sequence is ST. The active-site Proton donor is the His89. Phe114 lines the 5-amino-6-(D-ribitylamino)uracil pocket. Arg128 lines the (2S)-2-hydroxy-3-oxobutyl phosphate pocket.

Belongs to the DMRL synthase family.

It catalyses the reaction (2S)-2-hydroxy-3-oxobutyl phosphate + 5-amino-6-(D-ribitylamino)uracil = 6,7-dimethyl-8-(1-D-ribityl)lumazine + phosphate + 2 H2O + H(+). It participates in cofactor biosynthesis; riboflavin biosynthesis; riboflavin from 2-hydroxy-3-oxobutyl phosphate and 5-amino-6-(D-ribitylamino)uracil: step 1/2. In terms of biological role, catalyzes the formation of 6,7-dimethyl-8-ribityllumazine by condensation of 5-amino-6-(D-ribitylamino)uracil with 3,4-dihydroxy-2-butanone 4-phosphate. This is the penultimate step in the biosynthesis of riboflavin. The sequence is that of 6,7-dimethyl-8-ribityllumazine synthase from Campylobacter jejuni subsp. doylei (strain ATCC BAA-1458 / RM4099 / 269.97).